A 140-amino-acid polypeptide reads, in one-letter code: Small ribosomal subunit protein uS9 (140 aa).

This sequence belongs to the universal ribosomal protein uS9 family.

This Desulfurococcus amylolyticus (strain DSM 18924 / JCM 16383 / VKM B-2413 / 1221n) (Desulfurococcus kamchatkensis) protein is Small ribosomal subunit protein uS9.